The primary structure comprises 205 residues: Meiotic nuclear division protein 1 homolog (205 aa).

Residue Ser-2 is modified to N-acetylserine. Positions 83 to 173 (KRKLEVLDSQ…EAANRWTDNI (91 aa)) form a coiled coil.

Belongs to the MND1 family. In terms of assembly, heterodimer with PSMC3IP/HOP2. MND1-PSMC3IP interacts with DMC1 and RAD51 and binds preferentially to dsDNA.

The protein localises to the nucleus. Required for proper homologous chromosome pairing and efficient cross-over and intragenic recombination during meiosis. Stimulates both DMC1- and RAD51-mediated homologous strand assimilation, which is required for the resolution of meiotic double-strand breaks. The polypeptide is Meiotic nuclear division protein 1 homolog (Bos taurus (Bovine)).